Here is a 38-residue protein sequence, read N- to C-terminus: L-amino-acid oxidase (38 aa).

The protein belongs to the flavin monoamine oxidase family. FIG1 subfamily. In terms of assembly, homodimer; non-covalently linked. FAD is required as a cofactor. In terms of processing, N-glycosylated. As to expression, expressed by the venom gland.

Its subcellular location is the secreted. It catalyses the reaction an L-alpha-amino acid + O2 + H2O = a 2-oxocarboxylate + H2O2 + NH4(+). It carries out the reaction L-leucine + O2 + H2O = 4-methyl-2-oxopentanoate + H2O2 + NH4(+). The enzyme catalyses L-phenylalanine + O2 + H2O = 3-phenylpyruvate + H2O2 + NH4(+). The catalysed reaction is L-tryptophan + O2 + H2O = indole-3-pyruvate + H2O2 + NH4(+). It catalyses the reaction L-methionine + O2 + H2O = 4-methylsulfanyl-2-oxobutanoate + H2O2 + NH4(+). It carries out the reaction L-arginine + O2 + H2O = 5-guanidino-2-oxopentanoate + H2O2 + NH4(+). The enzyme catalyses L-2-aminohexanoate + O2 + H2O = 2-oxohexanoate + H2O2 + NH4(+). The catalysed reaction is L-2-aminopentanoate + O2 + H2O = 2-oxopentanoate + H2O2 + NH4(+). It catalyses the reaction L-tyrosine + O2 + H2O = 3-(4-hydroxyphenyl)pyruvate + H2O2 + NH4(+). Functionally, catalyzes an oxidative deamination of predominantly hydrophobic and aromatic L-amino acids, thus producing hydrogen peroxide that may contribute to the diverse toxic effects of this enzyme. Is very active against L-Phe and L-Tyr, moderately active against L-Trp, L-Met, L-Leu, L-norleucine (L-2-aminohexanoate), L-Arg and L-norvaline (L-2-aminopentanoate), and slightly active against L-His, L-cystine, and L-Ile. L-Gln, L-Lys, L-Asn, L-ornithine, L-Ala and L-Val are oxidized very slowly. Exhibits diverse biological activities, such as hemorrhage, hemolysis, edema, apoptosis of vascular endothelial cells or tumor cell lines, antibacterial and antiparasitic activities. This protein inhibits both agonist- and shear stress-induced platelet aggregation (SIPA). Effects of snake L-amino oxidases on platelets are controversial, since they either induce aggregation or inhibit agonist-induced aggregation. These different effects are probably due to different experimental conditions. The polypeptide is L-amino-acid oxidase (Naja kaouthia (Monocled cobra)).